The chain runs to 599 residues: MTPLSHIRNFSIVAHIDHGKSTLADRLIQSTNTVADRDMKEQMLDSMDIERERGITIKAQTVRINYTAQNGEEYVLNLIDTPGHVDFAYEVSRSMRAVEGSLLVVDSTQGVEAQTLANVYHAIDADHEIVPVLNKIDLPASDCDRVAEQIEDVIGIDASGAIQVSAKTGQGIMETLESIVQNLPAPKGDRDAPLKAMLVDSWYDSYLGVIVLVRIMDGVLKKGDRIRMLSNNSTHNVDRIGVFRPEMTAIDELGPGEIGFLTASIKQVRDTRVGDTITHEKKGTEVALPGFKPSQPVVFCGLFPVDSSEFEELRDSIEKLALNDASFSYEMETSAALGFGFRCGFLGLLHLEVIRDRIEREYDIELITTAPSVIYHVYMKDGAMIELHNPADMPDLTLVDHLEEPRIKATILVPDDYLGDVLKLCQDRRGIQQDLTYAGSRAMVVYDLPLNEVVFDFYDRLKSVTKGYASFDYAMIGYRTDNLVKMSILVNDEPVDALSIMVHRERAEGRGRAMVEKLKDLIPRHMFKIPIQAAIGGKVIARETLSAMRKDVTAKCYGGDATRKRKLLDKQKAGKKKMRQFGKVDIPQEAFISALKMDG.

In terms of domain architecture, tr-type G spans 5–187; it reads SHIRNFSIVA…SIVQNLPAPK (183 aa). Residues 17–22 and 134–137 contribute to the GTP site; these read DHGKST and NKID.

It belongs to the TRAFAC class translation factor GTPase superfamily. Classic translation factor GTPase family. LepA subfamily.

It localises to the cell inner membrane. The catalysed reaction is GTP + H2O = GDP + phosphate + H(+). In terms of biological role, required for accurate and efficient protein synthesis under certain stress conditions. May act as a fidelity factor of the translation reaction, by catalyzing a one-codon backward translocation of tRNAs on improperly translocated ribosomes. Back-translocation proceeds from a post-translocation (POST) complex to a pre-translocation (PRE) complex, thus giving elongation factor G a second chance to translocate the tRNAs correctly. Binds to ribosomes in a GTP-dependent manner. The protein is Elongation factor 4 of Roseobacter denitrificans (strain ATCC 33942 / OCh 114) (Erythrobacter sp. (strain OCh 114)).